A 360-amino-acid chain; its full sequence is Peptide chain release factor 1 (360 aa).

Glutamine 235 carries the post-translational modification N5-methylglutamine.

This sequence belongs to the prokaryotic/mitochondrial release factor family. Post-translationally, methylated by PrmC. Methylation increases the termination efficiency of RF1.

It localises to the cytoplasm. Functionally, peptide chain release factor 1 directs the termination of translation in response to the peptide chain termination codons UAG and UAA. This chain is Peptide chain release factor 1, found in Burkholderia multivorans (strain ATCC 17616 / 249).